A 189-amino-acid polypeptide reads, in one-letter code: Small ribosomal subunit protein uS5 (189 aa).

In terms of domain architecture, S5 DRBM spans 22 to 85 (FVDKLVAINR…EAAKRELIFV (64 aa)).

It belongs to the universal ribosomal protein uS5 family. Part of the 30S ribosomal subunit. Contacts proteins S4 and S8.

Its function is as follows. With S4 and S12 plays an important role in translational accuracy. Located at the back of the 30S subunit body where it stabilizes the conformation of the head with respect to the body. This is Small ribosomal subunit protein uS5 from Rhizobium johnstonii (strain DSM 114642 / LMG 32736 / 3841) (Rhizobium leguminosarum bv. viciae).